The following is an 858-amino-acid chain: Cone cGMP-specific 3',5'-cyclic phosphodiesterase subunit alpha' (858 aa).

GAF domains lie at 75-224 (TPEQ…SIIL) and 256-433 (DVER…GWSL). Residues serine 97, aspartate 116, 169-172 (DKQT), and threonine 176 contribute to the 3',5'-cyclic GMP site. Residues 486 to 819 (EEKQLVAILK…VEWKSLADEY (334 aa)) enclose the PDEase domain. Histidine 562 functions as the Proton donor in the catalytic mechanism. Residues histidine 566, histidine 602, aspartate 603, and aspartate 723 each coordinate a divalent metal cation. The segment covering 830 to 852 (AKKQEGGAEKAAEDSGGGDDKKS) has biased composition (basic and acidic residues). The disordered stretch occupies residues 830-858 (AKKQEGGAEKAAEDSGGGDDKKSKTCLML). Cysteine methyl ester is present on cysteine 855. Cysteine 855 carries the S-geranylgeranyl cysteine lipid modification. Residues 856 to 858 (LML) constitute a propeptide, removed in mature form.

The protein belongs to the cyclic nucleotide phosphodiesterase family. As to quaternary structure, composed of two alpha' subunits that are associated with 3 smaller proteins of 11, 13, and 15 kDa. A divalent metal cation serves as cofactor.

The protein localises to the cell membrane. It catalyses the reaction 3',5'-cyclic GMP + H2O = GMP + H(+). As cone-specific cGMP phosphodiesterase, it plays an essential role in light detection and cone phototransduction by rapidly decreasing intracellular levels of cGMP. This Homo sapiens (Human) protein is Cone cGMP-specific 3',5'-cyclic phosphodiesterase subunit alpha' (PDE6C).